A 371-amino-acid chain; its full sequence is Spermidine/putrescine import ATP-binding protein PotA (371 aa).

An ABC transporter domain is found at V10–I240. An ATP-binding site is contributed by G42–T49.

This sequence belongs to the ABC transporter superfamily. Spermidine/putrescine importer (TC 3.A.1.11.1) family. The complex is composed of two ATP-binding proteins (PotA), two transmembrane proteins (PotB and PotC) and a solute-binding protein (PotD).

Its subcellular location is the cell inner membrane. The catalysed reaction is ATP + H2O + polyamine-[polyamine-binding protein]Side 1 = ADP + phosphate + polyamineSide 2 + [polyamine-binding protein]Side 1.. Part of the ABC transporter complex PotABCD involved in spermidine/putrescine import. Responsible for energy coupling to the transport system. This Haemophilus ducreyi (strain 35000HP / ATCC 700724) protein is Spermidine/putrescine import ATP-binding protein PotA.